Consider the following 116-residue polypeptide: Protein lin-52 homolog (116 aa).

Phosphoserine occurs at positions 28 and 53.

Belongs to the lin-52 family. As to quaternary structure, component of the DREAM complex (also named LINC complex) at least composed of E2F4, E2F5, LIN9, LIN37, LIN52, LIN54, MYBL1, MYBL2, RBL1, RBL2, RBBP4, TFDP1 and TFDP2. The complex exists in quiescent cells where it represses cell cycle-dependent genes. It dissociates in S phase when LIN9, LIN37, LIN52 and LIN54 form a subcomplex that binds to MYBL2.

The chain is Protein lin-52 homolog (LIN52) from Homo sapiens (Human).